The chain runs to 274 residues: Penicillin-insensitive murein endopeptidase (274 aa).

Positions 1 to 19 (MKKTAIALLAWFVSSASLA) are cleaved as a signal peptide. 3 disulfide bridges follow: C44/C265, C187/C235, and C216/C223. Zn(2+)-binding residues include H110, H113, D120, D147, H150, and H211. The interval 225-274 (DQPLPPPGDGCGAELQSWFEPPKPGTTKPEKKTPPPLPPSCQALLDEHVL) is disordered.

Belongs to the peptidase M74 family. Dimer. Zn(2+) is required as a cofactor.

The protein resides in the periplasm. Its function is as follows. Murein endopeptidase that cleaves the D-alanyl-meso-2,6-diamino-pimelyl amide bond that connects peptidoglycan strands. Likely plays a role in the removal of murein from the sacculus. This Salmonella paratyphi A (strain AKU_12601) protein is Penicillin-insensitive murein endopeptidase.